A 507-amino-acid polypeptide reads, in one-letter code: Alkyl hydroperoxide reductase subunit F (507 aa).

207 to 222 serves as a coordination point for FAD; sequence DVLIVGGGPASGSAAI. C335 and C338 are oxidised to a cystine. 347–361 lines the NAD(+) pocket; sequence DVAVIGGGNSGVEAA. 467–477 is an FAD binding site; sequence TNVPGIFAAGD.

The protein belongs to the class-II pyridine nucleotide-disulfide oxidoreductase family. Homodimer. The cofactor is FAD.

Its function is as follows. Serves to protect the cell against DNA damage by alkyl hydroperoxides. It can use either NADH or NADPH as electron donor for direct reduction of redox dyes or of alkyl hydroperoxides when combined with the AhpC protein. The sequence is that of Alkyl hydroperoxide reductase subunit F (ahpF) from Staphylococcus epidermidis (strain ATCC 35984 / DSM 28319 / BCRC 17069 / CCUG 31568 / BM 3577 / RP62A).